The primary structure comprises 374 residues: Dual-specificity RNA methyltransferase RlmN (374 aa).

The active-site Proton acceptor is the Glu-94. The 240-residue stretch at 100 to 339 (EEDRATLCVS…VTIRKTRGDD (240 aa)) folds into the Radical SAM core domain. A disulfide bridge links Cys-107 with Cys-344. [4Fe-4S] cluster contacts are provided by Cys-114, Cys-118, and Cys-121. Residues 168-169 (GE), Ser-200, 222-224 (SLH), and Asn-301 contribute to the S-adenosyl-L-methionine site. Cys-344 (S-methylcysteine intermediate) is an active-site residue.

It belongs to the radical SAM superfamily. RlmN family. [4Fe-4S] cluster is required as a cofactor.

The protein resides in the cytoplasm. It carries out the reaction adenosine(2503) in 23S rRNA + 2 reduced [2Fe-2S]-[ferredoxin] + 2 S-adenosyl-L-methionine = 2-methyladenosine(2503) in 23S rRNA + 5'-deoxyadenosine + L-methionine + 2 oxidized [2Fe-2S]-[ferredoxin] + S-adenosyl-L-homocysteine. The enzyme catalyses adenosine(37) in tRNA + 2 reduced [2Fe-2S]-[ferredoxin] + 2 S-adenosyl-L-methionine = 2-methyladenosine(37) in tRNA + 5'-deoxyadenosine + L-methionine + 2 oxidized [2Fe-2S]-[ferredoxin] + S-adenosyl-L-homocysteine. Specifically methylates position 2 of adenine 2503 in 23S rRNA and position 2 of adenine 37 in tRNAs. m2A2503 modification seems to play a crucial role in the proofreading step occurring at the peptidyl transferase center and thus would serve to optimize ribosomal fidelity. The protein is Dual-specificity RNA methyltransferase RlmN of Vibrio vulnificus (strain YJ016).